The chain runs to 843 residues: Translation initiation factor IF-2 (843 aa).

Residues 94–259 (QRSPEEIEAE…AHGFQSPTGP (166 aa)) are disordered. A compositionally biased stretch (basic and acidic residues) spans 96–135 (SPEEIEAERKREMDERRAVENAARQKAEEEAKRRAEEDAR). Low complexity predominate over residues 136–177 (NQPAAGQPASAPAQPVAAAEPVREAPAPAAAAPAPASAAPSA). Composition is skewed to basic and acidic residues over residues 178 to 219 (DARK…EKAP) and 227 to 236 (TTDEESDSFR). Residues 237 to 250 (RGGRGKSRLKKRNA) show a composition bias toward basic residues. A tr-type G domain is found at 343–512 (SRAPVVTVMG…LLQAEVLELK (170 aa)). Residues 352–359 (GHVDHGKT) form a G1 region. 352 to 359 (GHVDHGKT) provides a ligand contact to GTP. The G2 stretch occupies residues 377–381 (GITQH). The G3 stretch occupies residues 398-401 (DTPG). GTP-binding positions include 398–402 (DTPGH) and 452–455 (NKID). The segment at 452-455 (NKID) is G4. Residues 488 to 490 (SAK) form a G5 region.

It belongs to the TRAFAC class translation factor GTPase superfamily. Classic translation factor GTPase family. IF-2 subfamily.

It localises to the cytoplasm. Functionally, one of the essential components for the initiation of protein synthesis. Protects formylmethionyl-tRNA from spontaneous hydrolysis and promotes its binding to the 30S ribosomal subunits. Also involved in the hydrolysis of GTP during the formation of the 70S ribosomal complex. The sequence is that of Translation initiation factor IF-2 from Pseudomonas savastanoi pv. phaseolicola (strain 1448A / Race 6) (Pseudomonas syringae pv. phaseolicola (strain 1448A / Race 6)).